Consider the following 351-residue polypeptide: Dihydroorotate dehydrogenase (quinone) (351 aa).

Residues 61 to 65 (AGLDK) and T85 each bind FMN. Residue K65 coordinates substrate. 110 to 114 (NRMGF) contributes to the substrate binding site. 2 residues coordinate FMN: N139 and N172. A substrate-binding site is contributed by N172. S175 functions as the Nucleophile in the catalytic mechanism. Residue N177 participates in substrate binding. Positions 217 and 245 each coordinate FMN. 246-247 (NT) is a substrate binding site. FMN is bound by residues G268, G297, and 318–319 (YS).

This sequence belongs to the dihydroorotate dehydrogenase family. Type 2 subfamily. As to quaternary structure, monomer. FMN serves as cofactor.

It is found in the cell membrane. It catalyses the reaction (S)-dihydroorotate + a quinone = orotate + a quinol. It functions in the pathway pyrimidine metabolism; UMP biosynthesis via de novo pathway; orotate from (S)-dihydroorotate (quinone route): step 1/1. Functionally, catalyzes the conversion of dihydroorotate to orotate with quinone as electron acceptor. The chain is Dihydroorotate dehydrogenase (quinone) from Stenotrophomonas maltophilia (strain K279a).